We begin with the raw amino-acid sequence, 207 residues long: Large ribosomal subunit protein uL3c (207 aa).

A disordered region spans residues 128–148 (FTRGPMTHGSKNHRAPGSIGM).

Belongs to the universal ribosomal protein uL3 family. Part of the 50S ribosomal subunit.

It localises to the plastid. The protein resides in the chloroplast. Functionally, one of the primary rRNA binding proteins, it binds directly near the 3'-end of the 23S rRNA, where it nucleates assembly of the 50S subunit. The polypeptide is Large ribosomal subunit protein uL3c (rpl3) (Trieres chinensis (Marine centric diatom)).